The primary structure comprises 140 residues: Ubiquitin-like protein ATG12 (140 aa).

Residues 1-52 form a disordered region; sequence MAEEPQTVLQLPPSSAAGGEGLTDVSPETTTPEPPSSAAVSPGTEEPAGDTK. The span at 25–42 shows a compositional bias: low complexity; that stretch reads VSPETTTPEPPSSAAVSP. Gly140 is covalently cross-linked (Glycyl lysine isopeptide (Gly-Lys) (interchain with K-? in acceptor protein)).

This sequence belongs to the ATG12 family. As to quaternary structure, forms a conjugate with ATG5. Part of the minor complex composed of 4 sets of ATG12-ATG5 and ATG16L1 (400 kDa); this complex interacts with ATG3 leading to disruption of ATG7 interaction and promotion of ATG8-like proteins lipidation. Forms an 800-kDa complex composed of ATG12-ATG5 and ATG16L2. Interacts with DHX58/RIG-1, IFIH1/MDA5 and MAVS/IPS-1 in monomeric form as well as in ATG12-ATG5 conjugate. The interaction with MAVS is further enhanced upon vesicular stomatitis virus (VSV) infection. Interacts with ATG3; this interaction is essential for phosphatidylethanolamine (PE)-conjugated ATG8-like proteins formation. Interacts with ATG7. Interacts with ATG10. Interacts with TECPR1. Interacts with SH3BGRL. The ATG12-ATG5 conjugate interacts with PDCD6IP (via the BRO1 domain); this interaction is bridged by ATG12 and promotes multiple PDCD6IP-mediated functions such as endolysosomal trafficking, macroautophagy and exosome biogenesis. Post-translationally, acetylated by EP300.

It localises to the cytoplasm. It is found in the preautophagosomal structure membrane. Functionally, ubiquitin-like protein involved in autophagy vesicles formation. Conjugation with ATG5 through a ubiquitin-like conjugating system involving also ATG7 as an E1-like activating enzyme and ATG10 as an E2-like conjugating enzyme, is essential for its function. The ATG12-ATG5 conjugate acts as an E3-like enzyme which is required for lipidation of ATG8 family proteins and their association to the vesicle membranes. The ATG12-ATG5 conjugate also negatively regulates the innate antiviral immune response by blocking the type I IFN production pathway through direct association with RARRES3 and MAVS. Also plays a role in translation or delivery of incoming viral RNA to the translation apparatus. As part of the ATG8 conjugation system with ATG5 and ATG16L1, required for recruitment of LRRK2 to stressed lysosomes and induction of LRRK2 kinase activity in response to lysosomal stress. The sequence is that of Ubiquitin-like protein ATG12 from Pongo abelii (Sumatran orangutan).